Here is an 89-residue protein sequence, read N- to C-terminus: uncharacterized protein (89 aa).

The helical transmembrane segment at 67–86 (VYLSSMYICFILLAIWMTVW) threads the bilayer.

It is found in the membrane. This is an uncharacterized protein from Bacillus subtilis (strain 168).